A 577-amino-acid polypeptide reads, in one-letter code: Thrombomodulin (577 aa).

The first 16 residues, 1-16 (MLGIFFLGVLAPASLG), serve as a signal peptide directing secretion. Residues 17-517 (LSALAKLQPT…GPPSARPVHS (501 aa)) are Extracellular-facing. The 137-residue stretch at 31 to 167 (VEHECFALFQ…TETQGFLCEF (137 aa)) folds into the C-type lectin domain. N-linked (GlcNAc...) asparagine glycosylation occurs at Asn-113. Cys-135 and Cys-156 are disulfide-bonded. EGF-like domains follow at residues 240-280 (GAWN…RSCA) and 283-323 (VVQS…HRCE). Residue Asn-243 is glycosylated (N-linked (GlcNAc...) asparagine). 18 cysteine pairs are disulfide-bonded: Cys-244–Cys-255, Cys-251–Cys-264, Cys-266–Cys-279, Cys-287–Cys-295, Cys-291–Cys-307, Cys-309–Cys-322, Cys-328–Cys-339, Cys-335–Cys-348, Cys-350–Cys-361, Cys-368–Cys-377, Cys-373–Cys-387, Cys-389–Cys-403, Cys-407–Cys-416, Cys-412–Cys-424, Cys-426–Cys-438, Cys-444–Cys-454, Cys-449–Cys-463, and Cys-465–Cys-479. An N-linked (GlcNAc...) asparagine glycan is attached at Asn-256. Positions 324-362 (DVDDCKQGPNPCPQLCVNTKGGFECFCYDGYELVDGECV) constitute an EGF-like 3; calcium-binding domain. EGF-like domains follow at residues 364 to 404 (LLDP…HKCE) and 403 to 439 (CEMF…SVCT). N-linked (GlcNAc...) asparagine glycosylation is present at Asn-408. One can recognise an EGF-like 6; calcium-binding domain in the interval 440–480 (DIDECSQGECFTSECRNFPGSYECICGPDTALAGQISKDCD). The tract at residues 476-513 (SKDCDPIPVREDTKEEEGSGEPPVSPTPGSPTGPPSAR) is disordered. Positions 477–492 (KDCDPIPVREDTKEEE) are enriched in basic and acidic residues. Ser-494 carries an O-linked (Xyl...) (chondroitin sulfate) serine glycan. A compositionally biased stretch (pro residues) spans 498–512 (PVSPTPGSPTGPPSA). Residues 518 to 541 (GVLIGISIASLSLVVALLALLCHL) form a helical membrane-spanning segment. The Cytoplasmic segment spans residues 542–577 (RKKQGAARAELEYKCASSAKEVVLQHVRTDRTLQKF).

Interacts with ITGAL, ITGAM and ITGB2. Interacts with thrombin/F2; this interaction switches the specificity of thrombin from a procoagulant to an anticoagulant and antifibrinolytic protease. Interacts with ANGP1 and ANGP2; these interactions significantly inhibit the generation of activated PC and TAFIa/CPB2 by the thrombin/thrombomodulin complex. Interacts with PF4; this interaction enhances generation of activated protein C. Interacts with HMGB1; this interaction inhibits HMGB1 inflammatory activity. Endothelial cells are unique in synthesizing thrombomodulin.

The protein localises to the membrane. Functionally, endothelial cell receptor that plays a critical role in regulating several physiological processes including hemostasis, coagulation, fibrinolysis, inflammation, and angiogenesis. Acts as a cofactor for thrombin activation of protein C/PROC on the surface of vascular endothelial cells leading to initiation of the activated protein C anticoagulant pathway. Also accelerates the activation of the plasma carboxypeptidase B2/CPB2, which catalyzes removal of C-terminal basic amino acids from its substrates including kinins or anaphylatoxins leading to fibrinolysis inhibition. Plays critical protective roles in changing the cleavage specificity of protease-activated receptor 1/PAR1, inhibiting endothelial cell permeability and inflammation. Suppresses inflammation distinctly from its anticoagulant cofactor activity by sequestering HMGB1 thereby preventing it from engaging cellular receptors such as RAGE and contributing to the inflammatory response. The sequence is that of Thrombomodulin (Thbd) from Mus musculus (Mouse).